A 61-amino-acid chain; its full sequence is MKGTPSFGKMNKSHTHIRCRRCGRNAYNVSKHYCAACGFGKTKKIRRYSWQNKKVNGVRIR.

Positions 19, 22, 34, and 37 each coordinate Zn(2+). A C4-type zinc finger spans residues 19–37; the sequence is CRRCGRNAYNVSKHYCAAC.

It belongs to the eukaryotic ribosomal protein eL37 family. It depends on Zn(2+) as a cofactor.

Its function is as follows. Binds to the 23S rRNA. The polypeptide is Large ribosomal subunit protein eL37 (Saccharolobus islandicus (strain L.S.2.15 / Lassen #1) (Sulfolobus islandicus)).